The sequence spans 106 residues: Large ribosomal subunit protein eL42 (106 aa).

It belongs to the eukaryotic ribosomal protein eL42 family.

The chain is Large ribosomal subunit protein eL42 (RPL44) from Schwanniomyces occidentalis (Yeast).